Consider the following 441-residue polypeptide: ATP-dependent protease ATPase subunit HslU (441 aa).

ATP is bound by residues isoleucine 18, 60–65 (GVGKTE), aspartate 254, glutamate 319, and arginine 391.

This sequence belongs to the ClpX chaperone family. HslU subfamily. In terms of assembly, a double ring-shaped homohexamer of HslV is capped on each side by a ring-shaped HslU homohexamer. The assembly of the HslU/HslV complex is dependent on binding of ATP.

It is found in the cytoplasm. ATPase subunit of a proteasome-like degradation complex; this subunit has chaperone activity. The binding of ATP and its subsequent hydrolysis by HslU are essential for unfolding of protein substrates subsequently hydrolyzed by HslV. HslU recognizes the N-terminal part of its protein substrates and unfolds these before they are guided to HslV for hydrolysis. The polypeptide is ATP-dependent protease ATPase subunit HslU (Shewanella sediminis (strain HAW-EB3)).